A 425-amino-acid chain; its full sequence is Enolase (425 aa).

Gln-162 is a (2R)-2-phosphoglycerate binding site. Glu-204 functions as the Proton donor in the catalytic mechanism. Mg(2+)-binding residues include Asp-241, Glu-282, and Asp-309. Residues Lys-334, Arg-363, Ser-364, and Lys-385 each coordinate (2R)-2-phosphoglycerate. Lys-334 functions as the Proton acceptor in the catalytic mechanism.

The protein belongs to the enolase family. It depends on Mg(2+) as a cofactor.

It localises to the cytoplasm. The protein localises to the secreted. The protein resides in the cell surface. It catalyses the reaction (2R)-2-phosphoglycerate = phosphoenolpyruvate + H2O. The protein operates within carbohydrate degradation; glycolysis; pyruvate from D-glyceraldehyde 3-phosphate: step 4/5. In terms of biological role, catalyzes the reversible conversion of 2-phosphoglycerate (2-PG) into phosphoenolpyruvate (PEP). It is essential for the degradation of carbohydrates via glycolysis. This chain is Enolase, found in Micrococcus luteus (strain ATCC 4698 / DSM 20030 / JCM 1464 / CCM 169 / CCUG 5858 / IAM 1056 / NBRC 3333 / NCIMB 9278 / NCTC 2665 / VKM Ac-2230) (Micrococcus lysodeikticus).